A 486-amino-acid polypeptide reads, in one-letter code: Protein nucleotidyltransferase YdiU (486 aa).

Residues G90, G92, R93, K113, D125, G126, R176, and R183 each coordinate ATP. D252 serves as the catalytic Proton acceptor. 2 residues coordinate Mg(2+): N253 and D262. D262 contacts ATP.

This sequence belongs to the SELO family. Mg(2+) is required as a cofactor. The cofactor is Mn(2+).

The enzyme catalyses L-seryl-[protein] + ATP = 3-O-(5'-adenylyl)-L-seryl-[protein] + diphosphate. It carries out the reaction L-threonyl-[protein] + ATP = 3-O-(5'-adenylyl)-L-threonyl-[protein] + diphosphate. The catalysed reaction is L-tyrosyl-[protein] + ATP = O-(5'-adenylyl)-L-tyrosyl-[protein] + diphosphate. It catalyses the reaction L-histidyl-[protein] + UTP = N(tele)-(5'-uridylyl)-L-histidyl-[protein] + diphosphate. The enzyme catalyses L-seryl-[protein] + UTP = O-(5'-uridylyl)-L-seryl-[protein] + diphosphate. It carries out the reaction L-tyrosyl-[protein] + UTP = O-(5'-uridylyl)-L-tyrosyl-[protein] + diphosphate. In terms of biological role, nucleotidyltransferase involved in the post-translational modification of proteins. It can catalyze the addition of adenosine monophosphate (AMP) or uridine monophosphate (UMP) to a protein, resulting in modifications known as AMPylation and UMPylation. The polypeptide is Protein nucleotidyltransferase YdiU (Pseudomonas aeruginosa (strain ATCC 15692 / DSM 22644 / CIP 104116 / JCM 14847 / LMG 12228 / 1C / PRS 101 / PAO1)).